The chain runs to 650 residues: Probable LIM domain-containing serine/threonine-protein kinase DDB_G0287001 (650 aa).

2 consecutive LIM zinc-binding domains span residues 4 to 63 and 64 to 122; these read NNCG…KLNA and RKCF…PSDK. 3 disordered regions span residues 118–138, 171–197, and 293–320; these read KPSD…LPGK, LSSS…SSFM, and LLNS…NLNT. Gly residues predominate over residues 173–188; that stretch reads SSGGSGNSISGSGGTN. The region spanning 386-643 is the Protein kinase domain; that stretch reads VAFGDVIASG…DTLKKISESL (258 aa). ATP-binding positions include 392-400 and lysine 413; that span reads IASGASGKV. The Proton acceptor role is filled by aspartate 509.

Belongs to the protein kinase superfamily. TKL Ser/Thr protein kinase family.

The enzyme catalyses L-seryl-[protein] + ATP = O-phospho-L-seryl-[protein] + ADP + H(+). It carries out the reaction L-threonyl-[protein] + ATP = O-phospho-L-threonyl-[protein] + ADP + H(+). The sequence is that of Probable LIM domain-containing serine/threonine-protein kinase DDB_G0287001 from Dictyostelium discoideum (Social amoeba).